Here is a 616-residue protein sequence, read N- to C-terminus: Carboxylic acid transporter protein homolog (616 aa).

Residues methionine 1–serine 11 show a composition bias toward basic and acidic residues. The tract at residues methionine 1–glutamine 65 is disordered. Serine 2 bears the N-acetylserine mark. Over serine 2–asparagine 140 the chain is Cytoplasmic. Residue serine 4 is modified to Phosphoserine. Residue lysine 9 forms a Glycyl lysine isopeptide (Lys-Gly) (interchain with G-Cter in ubiquitin) linkage. 3 positions are modified to phosphoserine: serine 11, serine 61, and serine 66. Threonine 70 carries the post-translational modification Phosphothreonine. The helical transmembrane segment at tyrosine 141–valine 161 threads the bilayer. Residues serine 162 to aspartate 176 lie on the Extracellular side of the membrane. Residues isoleucine 177 to leucine 197 form a helical membrane-spanning segment. The Cytoplasmic portion of the chain corresponds to tryptophan 198 to lysine 205. A helical transmembrane segment spans residues tryptophan 206–aspartate 226. The Extracellular portion of the chain corresponds to threonine 227–lysine 230. The chain crosses the membrane as a helical span at residues phenylalanine 231–alanine 251. The Cytoplasmic portion of the chain corresponds to threonine 252–serine 263. Residues phenylalanine 264 to tyrosine 284 form a helical membrane-spanning segment. Residues arginine 285–lysine 296 are Extracellular-facing. The chain crosses the membrane as a helical span at residues isoleucine 297–proline 317. At glutamate 318 to lysine 363 the chain is on the cytoplasmic side. A Glycyl lysine isopeptide (Lys-Gly) (interchain with G-Cter in ubiquitin) cross-link involves residue lysine 338. Residues tyrosine 364–alanine 384 form a helical membrane-spanning segment. The Extracellular portion of the chain corresponds to serine 385 to aspartate 402. A helical transmembrane segment spans residues alanine 403–glycine 423. Residues glutamine 424–arginine 432 are Cytoplasmic-facing. The chain crosses the membrane as a helical span at residues leucine 433–arginine 453. Residues serine 454–alanine 457 lie on the Extracellular side of the membrane. A helical membrane pass occupies residues isoleucine 458 to isoleucine 478. Topologically, residues histidine 479–arginine 489 are cytoplasmic. Residues alanine 490–isoleucine 510 form a helical membrane-spanning segment. At glutamate 511–lysine 535 the chain is on the extracellular side. Residues valine 536–histidine 556 form a helical membrane-spanning segment. Residues glutamate 557 to valine 616 lie on the Cytoplasmic side of the membrane. 3 positions are modified to phosphoserine: serine 584, serine 603, and serine 606.

It belongs to the major facilitator superfamily. Sugar transporter (TC 2.A.1.1) family.

The protein localises to the membrane. Essential to lactate transport. This chain is Carboxylic acid transporter protein homolog (JEN1), found in Saccharomyces cerevisiae (strain ATCC 204508 / S288c) (Baker's yeast).